The chain runs to 300 residues: 4-hydroxy-tetrahydrodipicolinate synthase (300 aa).

T45 is a pyruvate binding site. Y140 (proton donor/acceptor) is an active-site residue. K169 (schiff-base intermediate with substrate) is an active-site residue. Position 210 (I210) interacts with pyruvate.

It belongs to the DapA family. As to quaternary structure, homotetramer; dimer of dimers.

It is found in the cytoplasm. The enzyme catalyses L-aspartate 4-semialdehyde + pyruvate = (2S,4S)-4-hydroxy-2,3,4,5-tetrahydrodipicolinate + H2O + H(+). The protein operates within amino-acid biosynthesis; L-lysine biosynthesis via DAP pathway; (S)-tetrahydrodipicolinate from L-aspartate: step 3/4. Functionally, catalyzes the condensation of (S)-aspartate-beta-semialdehyde [(S)-ASA] and pyruvate to 4-hydroxy-tetrahydrodipicolinate (HTPA). The protein is 4-hydroxy-tetrahydrodipicolinate synthase of Helicobacter pylori (strain J99 / ATCC 700824) (Campylobacter pylori J99).